A 314-amino-acid polypeptide reads, in one-letter code: Homoserine O-acetyltransferase (314 aa).

Cysteine 142 functions as the Acyl-thioester intermediate in the catalytic mechanism. Positions 163 and 192 each coordinate substrate. The active-site Proton acceptor is the histidine 235. Residue glutamate 237 is part of the active site. Arginine 249 is a substrate binding site.

The protein belongs to the MetA family.

It localises to the cytoplasm. The enzyme catalyses L-homoserine + acetyl-CoA = O-acetyl-L-homoserine + CoA. Its pathway is amino-acid biosynthesis; L-methionine biosynthesis via de novo pathway; O-acetyl-L-homoserine from L-homoserine: step 1/1. In terms of biological role, transfers an acetyl group from acetyl-CoA to L-homoserine, forming acetyl-L-homoserine. The chain is Homoserine O-acetyltransferase from Streptococcus pneumoniae (strain JJA).